Consider the following 242-residue polypeptide: Small ribosomal subunit protein uS2 (242 aa).

The protein belongs to the universal ribosomal protein uS2 family.

The protein is Small ribosomal subunit protein uS2 of Shewanella putrefaciens (strain CN-32 / ATCC BAA-453).